A 334-amino-acid polypeptide reads, in one-letter code: BTB and MATH domain-containing protein 39 (334 aa).

Residues 14–141 form the MATH domain; it reads IVTLVFNIYN…EGRFQIEFDL (128 aa). The 66-residue stretch at 164 to 229 folds into the BTB domain; sequence ADGELITDGK…LQLDSFEVSV (66 aa).

The chain is BTB and MATH domain-containing protein 39 (bath-39) from Caenorhabditis elegans.